Consider the following 443-residue polypeptide: Phosphoglucosamine mutase (443 aa).

Residue Ser101 is the Phosphoserine intermediate of the active site. Mg(2+)-binding residues include Ser101, Asp239, Asp241, and Asp243. Ser101 carries the phosphoserine modification.

This sequence belongs to the phosphohexose mutase family. Mg(2+) is required as a cofactor. Activated by phosphorylation.

It carries out the reaction alpha-D-glucosamine 1-phosphate = D-glucosamine 6-phosphate. Functionally, catalyzes the conversion of glucosamine-6-phosphate to glucosamine-1-phosphate. This is Phosphoglucosamine mutase from Francisella tularensis subsp. tularensis (strain FSC 198).